Here is a 251-residue protein sequence, read N- to C-terminus: NADPH-dependent oxidoreductase (251 aa).

Belongs to the flavin oxidoreductase frp family. The cofactor is FMN.

Its function is as follows. Reduces FMN, organic nitro compounds and disulfide DTNB. Involved in maintenance of the cellular redox state and the disulfide stress response. The sequence is that of NADPH-dependent oxidoreductase (nfrA) from Staphylococcus aureus (strain MRSA252).